We begin with the raw amino-acid sequence, 509 residues long: Putative thymidine phosphorylase (509 aa).

The protein belongs to the thymidine/pyrimidine-nucleoside phosphorylase family. Type 2 subfamily.

It catalyses the reaction thymidine + phosphate = 2-deoxy-alpha-D-ribose 1-phosphate + thymine. The chain is Putative thymidine phosphorylase from Bradyrhizobium sp. (strain ORS 278).